We begin with the raw amino-acid sequence, 87 residues long: Small ribosomal subunit protein bS20 (87 aa).

A disordered region spans residues 1 to 22 (MANTSQARKRARQAGVRRVRNA). Positions 7–20 (ARKRARQAGVRRVR) are enriched in basic residues.

The protein belongs to the bacterial ribosomal protein bS20 family.

In terms of biological role, binds directly to 16S ribosomal RNA. The protein is Small ribosomal subunit protein bS20 of Nitrosococcus oceani (strain ATCC 19707 / BCRC 17464 / JCM 30415 / NCIMB 11848 / C-107).